A 396-amino-acid polypeptide reads, in one-letter code: Elongation factor Tu (396 aa).

Positions 10–206 (KPHVNVGTIG…ALDTFIPEPT (197 aa)) constitute a tr-type G domain. The tract at residues 19–26 (GHVDHGKT) is G1. 19–26 (GHVDHGKT) contacts GTP. Threonine 26 is a binding site for Mg(2+). Residues 60 to 64 (GITIS) are G2. Residues 81-84 (DCPG) form a G3 region. Residues 81–85 (DCPGH) and 136–139 (NKAD) contribute to the GTP site. The interval 136–139 (NKAD) is G4. Positions 174-176 (SAR) are G5.

It belongs to the TRAFAC class translation factor GTPase superfamily. Classic translation factor GTPase family. EF-Tu/EF-1A subfamily. In terms of assembly, monomer.

The protein localises to the cytoplasm. The enzyme catalyses GTP + H2O = GDP + phosphate + H(+). Functionally, GTP hydrolase that promotes the GTP-dependent binding of aminoacyl-tRNA to the A-site of ribosomes during protein biosynthesis. This Xanthomonas oryzae pv. oryzae (strain MAFF 311018) protein is Elongation factor Tu.